Consider the following 48-residue polypeptide: ATP synthase protein 8 (48 aa).

A helical transmembrane segment spans residues 4 to 24 (LVPFFFVNQVVFAFIVLTVLI).

This sequence belongs to the ATPase protein 8 family. In terms of assembly, F-type ATPases have 2 components, CF(1) - the catalytic core - and CF(0) - the membrane proton channel.

The protein resides in the mitochondrion membrane. Its function is as follows. Mitochondrial membrane ATP synthase (F(1)F(0) ATP synthase or Complex V) produces ATP from ADP in the presence of a proton gradient across the membrane which is generated by electron transport complexes of the respiratory chain. F-type ATPases consist of two structural domains, F(1) - containing the extramembraneous catalytic core and F(0) - containing the membrane proton channel, linked together by a central stalk and a peripheral stalk. During catalysis, ATP synthesis in the catalytic domain of F(1) is coupled via a rotary mechanism of the central stalk subunits to proton translocation. Part of the complex F(0) domain. Minor subunit located with subunit a in the membrane. The polypeptide is ATP synthase protein 8 (atp8) (Emericella nidulans (Aspergillus nidulans)).